Consider the following 322-residue polypeptide: 4-diphosphocytidyl-2-C-methyl-D-erythritol kinase (322 aa).

The active site involves K18. ATP is bound at residue 130 to 140; the sequence is PMGAGLGGGSS. D172 is a catalytic residue.

The protein belongs to the GHMP kinase family. IspE subfamily.

The catalysed reaction is 4-CDP-2-C-methyl-D-erythritol + ATP = 4-CDP-2-C-methyl-D-erythritol 2-phosphate + ADP + H(+). The protein operates within isoprenoid biosynthesis; isopentenyl diphosphate biosynthesis via DXP pathway; isopentenyl diphosphate from 1-deoxy-D-xylulose 5-phosphate: step 3/6. Catalyzes the phosphorylation of the position 2 hydroxy group of 4-diphosphocytidyl-2C-methyl-D-erythritol. This Psychrobacter cryohalolentis (strain ATCC BAA-1226 / DSM 17306 / VKM B-2378 / K5) protein is 4-diphosphocytidyl-2-C-methyl-D-erythritol kinase.